The sequence spans 643 residues: Phosphatidylinositol-3,5-bisphosphate 3-phosphatase MTMR2 (643 aa).

2 stretches are compositionally biased toward polar residues: residues methionine 1 to serine 12 and aspartate 23 to lysine 40. The disordered stretch occupies residues methionine 1–alanine 54. A phosphoserine mark is found at serine 6 and serine 9. Positions serine 41 to alanine 54 are enriched in low complexity. Residue serine 58 is modified to Phosphoserine. The 72-residue stretch at asparagine 68–glycine 139 folds into the GRAM domain. The Myotubularin phosphatase domain occupies glycine 205 to tyrosine 580. Residues asparagine 330, asparagine 355, and isoleucine 356 each coordinate a 1,2-diacyl-sn-glycero-3-phospho-(1D-myo-inositol-3,5-bisphosphate). A 1,2-diacyl-sn-glycero-3-phospho-(1D-myo-inositol-3-phosphate)-binding residues include asparagine 330, asparagine 355, and isoleucine 356. Cysteine 417 acts as the Phosphocysteine intermediate in catalysis. Positions 418, 419, 420, 421, 422, 423, 459, and 463 each coordinate a 1,2-diacyl-sn-glycero-3-phospho-(1D-myo-inositol-3,5-bisphosphate). A 1,2-diacyl-sn-glycero-3-phospho-(1D-myo-inositol-3-phosphate) contacts are provided by serine 418, aspartate 419, glycine 420, tryptophan 421, aspartate 422, and arginine 423. Arginine 463 serves as a coordination point for a 1,2-diacyl-sn-glycero-3-phospho-(1D-myo-inositol-3-phosphate). A coiled-coil region spans residues isoleucine 593–glutamate 627. The segment at leucine 614 to valine 643 is disordered.

The protein belongs to the protein-tyrosine phosphatase family. Non-receptor class myotubularin subfamily. In terms of assembly, homodimer (via coiled-coil domain). Heterotetramer consisting of one MTMR2 dimer and one SBF2/MTMR13 dimer; specifically in peripheral nerves stabilizes SBF2/MTMR13 at the membranes and increases MTMR2 catalytic activity towards phosphatidylinositol 3,5-bisphosphate and to a lesser extent towards phosphatidylinositol 3-phosphate. Heterodimer with SBF1/MTMR5; acts as an adapter for the phosphatase MTMR2 to regulate MTMR2 catalytic activity and subcellular location. Heterodimer with MTMR12. Phosphorylation at Ser-58 decreases MTMR2 localization to endocytic vesicular structures.

The protein localises to the cytoplasm. The protein resides in the early endosome membrane. Its subcellular location is the perinuclear region. It is found in the cell projection. It localises to the axon. The protein localises to the endosome membrane. The enzyme catalyses a 1,2-diacyl-sn-glycero-3-phospho-(1D-myo-inositol-3,5-bisphosphate) + H2O = a 1,2-diacyl-sn-glycero-3-phospho-(1D-myo-inositol-5-phosphate) + phosphate. It carries out the reaction a 1,2-diacyl-sn-glycero-3-phospho-(1D-myo-inositol-3-phosphate) + H2O = a 1,2-diacyl-sn-glycero-3-phospho-(1D-myo-inositol) + phosphate. The catalysed reaction is 1,2-dioctanoyl-sn-glycero-3-phospho-(1-D-myo-inositol-3-phosphate) + H2O = 1,2-dioctanoyl-sn-glycero-3-phospho-(1D-myo-inositol) + phosphate. It catalyses the reaction 1,2-dioctanoyl-sn-glycero-3-phospho-(1D-myo-inositol-3,5-bisphosphate) + H2O = 1,2-dioctanoyl-sn-glycero-3-phospho-(1D-myo-inositol-5-phosphate) + phosphate. Functionally, lipid phosphatase that specifically dephosphorylates the D-3 position of phosphatidylinositol 3-phosphate and phosphatidylinositol 3,5-bisphosphate, generating phosphatidylinositol and phosphatidylinositol 5-phosphate. Regulates the level of these phosphoinositides critical for various biological processes including autophagy initiation and autophagosome maturation. The polypeptide is Phosphatidylinositol-3,5-bisphosphate 3-phosphatase MTMR2 (Bos taurus (Bovine)).